The sequence spans 626 residues: Probable potassium transport system protein Kup (626 aa).

12 helical membrane passes run 11–31, 55–75, 103–123, 140–160, 171–191, 216–236, 250–270, 282–302, 340–360, 369–389, 395–415, and 422–442; these read FLTL…TSPL, LSLI…VFVM, AWII…GMIT, AALS…LFLI, LFGP…FVSL, LGFA…ALYA, WFAV…ALLI, LLVP…ATVI, IYAP…VLAF, AYGL…LVVA, WPGL…LSFL, and LGDG…VMST.

This sequence belongs to the HAK/KUP transporter (TC 2.A.72) family.

It is found in the cell inner membrane. It carries out the reaction K(+)(in) + H(+)(in) = K(+)(out) + H(+)(out). Its function is as follows. Transport of potassium into the cell. Likely operates as a K(+):H(+) symporter. This Methylococcus capsulatus (strain ATCC 33009 / NCIMB 11132 / Bath) protein is Probable potassium transport system protein Kup.